The primary structure comprises 596 residues: NADH-quinone oxidoreductase subunit C/D (596 aa).

Residues 1–186 (MMNDNKYIHI…PAFTLTRKKE (186 aa)) form an NADH dehydrogenase I subunit C region. Positions 210–596 (DFMFLNLGPN…IDFVMSDVDR (387 aa)) are NADH dehydrogenase I subunit D.

It in the N-terminal section; belongs to the complex I 30 kDa subunit family. The protein in the C-terminal section; belongs to the complex I 49 kDa subunit family. NDH-1 is composed of 13 different subunits. Subunits NuoB, CD, E, F, and G constitute the peripheral sector of the complex.

The protein resides in the cell inner membrane. It carries out the reaction a quinone + NADH + 5 H(+)(in) = a quinol + NAD(+) + 4 H(+)(out). NDH-1 shuttles electrons from NADH, via FMN and iron-sulfur (Fe-S) centers, to quinones in the respiratory chain. The immediate electron acceptor for the enzyme in this species is believed to be ubiquinone. Couples the redox reaction to proton translocation (for every two electrons transferred, four hydrogen ions are translocated across the cytoplasmic membrane), and thus conserves the redox energy in a proton gradient. This Blochmanniella floridana protein is NADH-quinone oxidoreductase subunit C/D.